We begin with the raw amino-acid sequence, 447 residues long: Transcription factor azf1 (447 aa).

Disordered regions lie at residues 125 to 155 (HNGASQQPPGAQSSSNEEGAQGKSSSSNEVE) and 174 to 199 (QSPGVQSLPPLQQLTHGGSNGYPQSY). The span at 127–139 (GASQQPPGAQSSS) shows a compositional bias: low complexity. Residues 140–155 (NEEGAQGKSSSSNEVE) are compositionally biased toward polar residues. 4 C2H2-type zinc fingers span residues 225 to 249 (YACTLPQCGKSFAQKTHLDIHMRAH), 255 to 279 (FVCKEPSCGQRFSQLGNLKTHQRRH), 285 to 307 (FSCDICQKRFAQRGNVRAHKITH), and 313 to 338 (FTCLLDDCGKQFTQLGNLKSHQNKFH). The disordered stretch occupies residues 377–447 (NKGIKGRGKD…EPYFIERQAH (71 aa)). Basic and acidic residues predominate over residues 397-416 (PGSESRRRIEPLSSTDDKMR). The span at 421 to 431 (GDTSMYNGGSS) shows a compositional bias: polar residues.

Its subcellular location is the nucleus. Transcription factor that acts as a positive regulator of ochratoxin A (OTA) biosynthesis via controlling the expression of antioxidant genes and oxidative phosphorylation genes. This is Transcription factor azf1 from Aspergillus niger (strain ATCC MYA-4892 / CBS 513.88 / FGSC A1513).